The following is a 900-amino-acid chain: Minor teichoic acid biosynthesis protein GgaB (900 aa).

The protein belongs to the glycosyltransferase 2 family.

Its pathway is cell wall biogenesis; poly(glucopyranosyl N-acetylgalactosamine 1-phosphate) teichoic acid biosynthesis. Functionally, involved in the biosynthesis of galactosamine-containing minor teichoic acid, a non-essential cell wall polymer in B.subtilis 168. The polypeptide is Minor teichoic acid biosynthesis protein GgaB (ggaB) (Bacillus subtilis (strain 168)).